Here is a 310-residue protein sequence, read N- to C-terminus: Protein-L-isoaspartate O-methyltransferase (310 aa).

Disordered regions lie at residues 1–42 (MSGE…AADK) and 64–90 (SAAA…APSV). Residues 14–32 (EDLKRAPRKSEGRAGERHA) show a composition bias toward basic and acidic residues. Residues 64–81 (SAAAKPATAPKPTALKPA) are compositionally biased toward low complexity. The active site involves S157.

The protein belongs to the methyltransferase superfamily. L-isoaspartyl/D-aspartyl protein methyltransferase family.

It is found in the cytoplasm. The catalysed reaction is [protein]-L-isoaspartate + S-adenosyl-L-methionine = [protein]-L-isoaspartate alpha-methyl ester + S-adenosyl-L-homocysteine. Its function is as follows. Catalyzes the methyl esterification of L-isoaspartyl residues in peptides and proteins that result from spontaneous decomposition of normal L-aspartyl and L-asparaginyl residues. It plays a role in the repair and/or degradation of damaged proteins. This chain is Protein-L-isoaspartate O-methyltransferase, found in Burkholderia lata (strain ATCC 17760 / DSM 23089 / LMG 22485 / NCIMB 9086 / R18194 / 383).